The primary structure comprises 31 residues: Cytochrome b6-f complex subunit 6 (31 aa).

Residues 4–26 (ITSYFGFLLAASTITTALFIGLS) form a helical membrane-spanning segment.

It belongs to the PetL family. The 4 large subunits of the cytochrome b6-f complex are cytochrome b6, subunit IV (17 kDa polypeptide, PetD), cytochrome f and the Rieske protein, while the 4 small subunits are PetG, PetL, PetM and PetN. The complex functions as a dimer.

Its subcellular location is the plastid. It localises to the chloroplast thylakoid membrane. Functionally, component of the cytochrome b6-f complex, which mediates electron transfer between photosystem II (PSII) and photosystem I (PSI), cyclic electron flow around PSI, and state transitions. PetL is important for photoautotrophic growth as well as for electron transfer efficiency and stability of the cytochrome b6-f complex. This Acorus calamus (Sweet flag) protein is Cytochrome b6-f complex subunit 6.